A 469-amino-acid polypeptide reads, in one-letter code: Sulfate adenylyltransferase subunit 1 (469 aa).

In terms of domain architecture, tr-type G spans 22–224 (KDLMRFITCG…NMTWYPGSPL (203 aa)). The tract at residues 31-38 (GSVDDGKS) is G1. GTP is bound at residue 31–38 (GSVDDGKS). Residues 89–93 (GITID) are G2. The segment at 110–113 (DTPG) is G3. GTP-binding positions include 110–114 (DTPGH) and 165–168 (NKMD). The interval 165–168 (NKMD) is G4. The interval 202–204 (SAL) is G5.

Belongs to the TRAFAC class translation factor GTPase superfamily. Classic translation factor GTPase family. CysN/NodQ subfamily. As to quaternary structure, heterodimer composed of CysD, the smaller subunit, and CysN.

It carries out the reaction sulfate + ATP + H(+) = adenosine 5'-phosphosulfate + diphosphate. Its pathway is sulfur metabolism; hydrogen sulfide biosynthesis; sulfite from sulfate: step 1/3. Functionally, with CysD forms the ATP sulfurylase (ATPS) that catalyzes the adenylation of sulfate producing adenosine 5'-phosphosulfate (APS) and diphosphate, the first enzymatic step in sulfur assimilation pathway. APS synthesis involves the formation of a high-energy phosphoric-sulfuric acid anhydride bond driven by GTP hydrolysis by CysN coupled to ATP hydrolysis by CysD. This Psychromonas ingrahamii (strain DSM 17664 / CCUG 51855 / 37) protein is Sulfate adenylyltransferase subunit 1.